The primary structure comprises 200 residues: Thymidylate kinase (200 aa).

10–17 (GIDGAGKS) lines the ATP pocket.

This sequence belongs to the thymidylate kinase family.

The enzyme catalyses dTMP + ATP = dTDP + ADP. Functionally, phosphorylation of dTMP to form dTDP in both de novo and salvage pathways of dTTP synthesis. This Cupriavidus metallidurans (strain ATCC 43123 / DSM 2839 / NBRC 102507 / CH34) (Ralstonia metallidurans) protein is Thymidylate kinase.